The sequence spans 146 residues: Cytochrome c-type biogenesis protein CcmE (146 aa).

At 1 to 8 the chain is on the cytoplasmic side; sequence MHPKRKKR. A helical; Signal-anchor for type II membrane protein membrane pass occupies residues 9–29; the sequence is LLIVLAGLAVVAVASGLILNA. Over 30–146 the chain is Periplasmic; the sequence is FRSNLVFFHT…IQRAGETVVQ (117 aa). Heme is bound by residues histidine 124 and tyrosine 128.

Belongs to the CcmE/CycJ family.

The protein localises to the cell inner membrane. Heme chaperone required for the biogenesis of c-type cytochromes. Transiently binds heme delivered by CcmC and transfers the heme to apo-cytochromes in a process facilitated by CcmF and CcmH. The polypeptide is Cytochrome c-type biogenesis protein CcmE (Laribacter hongkongensis (strain HLHK9)).